A 306-amino-acid polypeptide reads, in one-letter code: UDP-N-acetylenolpyruvoylglucosamine reductase (306 aa).

Residues 34 to 199 form the FAD-binding PCMH-type domain; that stretch reads KSGGAAEWLF…VAATFRGHAE (166 aa). R179 is a catalytic residue. The tract at residues 215–234 is disordered; sequence REASQPLRSRTGGSTFKNPQ. Positions 220 to 232 are enriched in polar residues; it reads PLRSRTGGSTFKN. S228 acts as the Proton donor in catalysis. The active site involves E298.

This sequence belongs to the MurB family. Requires FAD as cofactor.

It is found in the cytoplasm. The enzyme catalyses UDP-N-acetyl-alpha-D-muramate + NADP(+) = UDP-N-acetyl-3-O-(1-carboxyvinyl)-alpha-D-glucosamine + NADPH + H(+). The protein operates within cell wall biogenesis; peptidoglycan biosynthesis. Cell wall formation. This Rhizorhabdus wittichii (strain DSM 6014 / CCUG 31198 / JCM 15750 / NBRC 105917 / EY 4224 / RW1) (Sphingomonas wittichii) protein is UDP-N-acetylenolpyruvoylglucosamine reductase.